The sequence spans 1048 residues: PH and SEC7 domain-containing protein 3 (1048 aa).

Residues 36–45 (SEGKAPDTSD) are compositionally biased toward basic and acidic residues. Residues 36–57 (SEGKAPDTSDHGGSTLLPPNVT) are disordered. A Phosphoserine modification is found at serine 76. Disordered stretches follow at residues 104 to 126 (LDSV…LKEQ), 310 to 342 (GGDK…KVPR), 364 to 383 (SWKA…SPVR), and 395 to 434 (QENK…PGYT). The span at 311 to 321 (GDKRETQHPID) shows a compositional bias: basic and acidic residues. A compositionally biased stretch (basic and acidic residues) spans 397–423 (NKQHLEKTPKPERDRERISEQEEHVKG). The 201-residue stretch at 534 to 734 (TKGTPEIAFW…KALYNSIKNE (201 aa)) folds into the SEC7 domain. The span at 741-758 (DDEEKKKSPSESTEEKAN) shows a compositional bias: basic and acidic residues. Positions 741–769 (DDEEKKKSPSESTEEKANGTHPKTISRIG) are disordered. A Phosphoserine modification is found at serine 770. The PH domain occupies 785–898 (AVYKSGFLAR…WINKINCVAA (114 aa)). The stretch at 922–952 (ATTTKLSQEEQLKSHESKLKQITTELAEHRS) forms a coiled coil. Positions 999–1048 (DESEAAGLKKSHSSPSLNPDTSPITAKVKRNVSERKDHRPETPSIKQKVT) are disordered. Serine 1009, serine 1011, serine 1012, serine 1014, and serine 1020 each carry phosphoserine. Over residues 1011 to 1022 (SSPSLNPDTSPI) the composition is skewed to polar residues. A compositionally biased stretch (basic and acidic residues) spans 1029–1039 (NVSERKDHRPE).

Isoform 2 is expressed in epididymis (at protein level).

The protein resides in the cell membrane. Its subcellular location is the cell projection. It localises to the ruffle membrane. The protein localises to the postsynaptic density. Its function is as follows. Guanine nucleotide exchange factor for ARF6. The chain is PH and SEC7 domain-containing protein 3 (PSD3) from Homo sapiens (Human).